Reading from the N-terminus, the 434-residue chain is Enolase (434 aa).

Residue Gln-166 participates in (2R)-2-phosphoglycerate binding. Glu-208 (proton donor) is an active-site residue. Mg(2+) contacts are provided by Asp-245, Glu-290, and Asp-317. Positions 342, 371, 372, and 393 each coordinate (2R)-2-phosphoglycerate. The active-site Proton acceptor is the Lys-342.

Belongs to the enolase family. Mg(2+) serves as cofactor.

The protein localises to the cytoplasm. Its subcellular location is the secreted. It localises to the cell surface. The catalysed reaction is (2R)-2-phosphoglycerate = phosphoenolpyruvate + H2O. It functions in the pathway carbohydrate degradation; glycolysis; pyruvate from D-glyceraldehyde 3-phosphate: step 4/5. Catalyzes the reversible conversion of 2-phosphoglycerate (2-PG) into phosphoenolpyruvate (PEP). It is essential for the degradation of carbohydrates via glycolysis. This Caldicellulosiruptor bescii (strain ATCC BAA-1888 / DSM 6725 / KCTC 15123 / Z-1320) (Anaerocellum thermophilum) protein is Enolase.